The following is a 512-amino-acid chain: 2,3-bisphosphoglycerate-independent phosphoglycerate mutase (512 aa).

Residues Asp11 and Ser61 each coordinate Mn(2+). The active-site Phosphoserine intermediate is the Ser61. Substrate contacts are provided by residues His122, 152–153 (RD), Arg184, Arg190, 259–262 (RADR), and Lys332. Asp399, His403, Asp440, His441, and His459 together coordinate Mn(2+).

This sequence belongs to the BPG-independent phosphoglycerate mutase family. In terms of assembly, monomer. The cofactor is Mn(2+).

It catalyses the reaction (2R)-2-phosphoglycerate = (2R)-3-phosphoglycerate. The protein operates within carbohydrate degradation; glycolysis; pyruvate from D-glyceraldehyde 3-phosphate: step 3/5. Functionally, catalyzes the interconversion of 2-phosphoglycerate and 3-phosphoglycerate. This chain is 2,3-bisphosphoglycerate-independent phosphoglycerate mutase, found in Francisella philomiragia subsp. philomiragia (strain ATCC 25017 / CCUG 19701 / FSC 153 / O#319-036).